We begin with the raw amino-acid sequence, 380 residues long: Actinidain (380 aa).

A signal peptide spans 1–24; the sequence is MGLPKSFVSMSLLFFSTLLILSLA. A propeptide spans 25-126 (activation peptide); that stretch reads FNAKNLTQRT…NRYEPRVGQV (102 aa). Asn-29, Asn-81, and Asn-111 each carry an N-linked (GlcNAc...) asparagine glycan. Cystine bridges form between Cys-148/Cys-191, Cys-182/Cys-224, and Cys-282/Cys-332. Cys-151 is an active-site residue. Catalysis depends on residues His-288 and Asn-308.

This sequence belongs to the peptidase C1 family. As to expression, fruit, present in small cells of the outer pericarp of mature fruit, but not large cells.

The enzyme catalyses Specificity close to that of papain.. Its function is as follows. Cysteine protease responsible for the cleavage of kiwellin into kissper and KiTH. The chain is Actinidain from Actinidia deliciosa (Kiwi).